Here is a 122-residue protein sequence, read N- to C-terminus: uncharacterized protein (122 aa).

This is an uncharacterized protein from Aquifex aeolicus (strain VF5).